The chain runs to 501 residues: Tegument protein US24 (501 aa).

The protein belongs to the herpesviridae US22 family.

The protein localises to the virion tegument. This is Tegument protein US24 (US24) from Human cytomegalovirus (strain AD169) (HHV-5).